A 377-amino-acid chain; its full sequence is Chaperone MoxR1 (377 aa).

Residues 1-33 form a disordered region; sequence MTSAGGFPAGAGGYQTPGGHSASPAHEAPPGGA. Gly residues predominate over residues 7–16; that stretch reads FPAGAGGYQT. Residues 19-33 show a composition bias toward low complexity; it reads GHSASPAHEAPPGGA. Residue 78–85 participates in ATP binding; that stretch reads GVPGVAKT.

It belongs to the MoxR family. In terms of assembly, interacts with RipA. Interacts with host Toll-like receptor 4 (TLR4).

Functionally, displays ATP-enhanced chaperone activity. Required for the proper folding of the peptidoglycan endopeptidase RipA and its secretion through the TAT secretion system. In vitro, prevents thermal aggregation of MalZ protein and protects the functional activity of the restriction enzyme NdeI from thermal inactivation. In terms of biological role, could be a moonlighting protein that uses a multipronged approach to dampen host-directed immunity for efficient replication, survival and pathogenesis. Can enhance virulence by inhibiting autophagy and apoptosis, and disrupting cellular bioenergetics. Binds and activates host TLR4 on the surface of macrophage cells, leading to the activation of the host NFKB and MAPK signaling cascades and enhanced secretion of proinflammatory cytokines. Inhibits autophagic flux via activation of PI3K-AKT-MTOR-ULK1 signaling cascade and represses apoptosis via inhibiting protooncogene c-FOS and MAPK JNK1/2. Also induces robust disruption of cellular bioenergetics by metabolic reprogramming to rewire the citric acid cycle intermediates for its benefit. The polypeptide is Chaperone MoxR1 (Mycobacterium tuberculosis (strain ATCC 25618 / H37Rv)).